Consider the following 244-residue polypeptide: Phosphoadenosine 5'-phosphosulfate reductase (244 aa).

The Nucleophile; cysteine thiosulfonate intermediate role is filled by Cys-239.

The protein belongs to the PAPS reductase family. CysH subfamily.

It is found in the cytoplasm. The enzyme catalyses [thioredoxin]-disulfide + sulfite + adenosine 3',5'-bisphosphate + 2 H(+) = [thioredoxin]-dithiol + 3'-phosphoadenylyl sulfate. It functions in the pathway sulfur metabolism; hydrogen sulfide biosynthesis; sulfite from sulfate: step 3/3. Functionally, catalyzes the formation of sulfite from phosphoadenosine 5'-phosphosulfate (PAPS) using thioredoxin as an electron donor. The protein is Phosphoadenosine 5'-phosphosulfate reductase of Pectobacterium atrosepticum (strain SCRI 1043 / ATCC BAA-672) (Erwinia carotovora subsp. atroseptica).